Reading from the N-terminus, the 378-residue chain is Nitronate monooxygenase (378 aa).

Positions 1–15 (MHFPGHSSKKEESAQ) are excised as a propeptide. 37–39 (PMY) serves as a coordination point for FMN. The active-site Proton acceptor is H196. Substrate is bound at residue H196. FMN contacts are provided by residues 229-231 (AGG) and 252-253 (GT).

It belongs to the nitronate monooxygenase family. NMO class II subfamily. In terms of assembly, homodimer. FMN serves as cofactor.

It catalyses the reaction ethylnitronate + O2 = chemical entity + acetaldehyde + nitrite + H(+). Catalyzes the oxidation of alkyl nitronates to produce the corresponding carbonyl compounds and nitrites. Anionic forms of nitroalkanes are much better substrates than are neutral forms. The polypeptide is Nitronate monooxygenase (ncd-2) (Neurospora crassa (strain ATCC 24698 / 74-OR23-1A / CBS 708.71 / DSM 1257 / FGSC 987)).